The primary structure comprises 385 residues: Glucans biosynthesis protein C (385 aa).

The next 10 membrane-spanning stretches (helical) occupy residues 17 to 37 (AWLM…SHTW), 60 to 80 (MQVF…RYPL), 91 to 111 (VGIP…IMLQ), 137 to 157 (ISHL…VWIF), 173 to 193 (KFSM…YAVI), 212 to 232 (FIVM…LAFI), 239 to 259 (LFTT…VAYL), 274 to 294 (TESV…FSFG), 311 to 331 (ASLF…AYIT), and 338 to 358 (WLGF…LYEI).

This sequence belongs to the acyltransferase 3 family. OpgC subfamily.

The protein localises to the cell membrane. It functions in the pathway glycan metabolism; osmoregulated periplasmic glucan (OPG) biosynthesis. Functionally, necessary for the succinyl substitution of periplasmic glucans. Could catalyze the transfer of succinyl residues from the cytoplasmic side of the membrane to the nascent glucan backbones on the periplasmic side of the membrane. The polypeptide is Glucans biosynthesis protein C (Escherichia coli O17:K52:H18 (strain UMN026 / ExPEC)).